The primary structure comprises 429 residues: Adenylosuccinate synthetase (429 aa).

GTP is bound by residues 12–18 (GDEGKGK) and 40–42 (GHT). The active-site Proton acceptor is D13. Mg(2+) is bound by residues D13 and G40. IMP contacts are provided by residues 13 to 16 (DEGK), 38 to 41 (NAGH), T128, R142, Q223, T238, and R302. H41 (proton donor) is an active-site residue. Position 298-304 (298-304 (TTTGRPR)) interacts with substrate. GTP-binding positions include R304, 330-332 (SID), and 412-414 (SVG).

Belongs to the adenylosuccinate synthetase family. As to quaternary structure, homodimer. Requires Mg(2+) as cofactor.

Its subcellular location is the cytoplasm. It catalyses the reaction IMP + L-aspartate + GTP = N(6)-(1,2-dicarboxyethyl)-AMP + GDP + phosphate + 2 H(+). It participates in purine metabolism; AMP biosynthesis via de novo pathway; AMP from IMP: step 1/2. Plays an important role in the de novo pathway of purine nucleotide biosynthesis. Catalyzes the first committed step in the biosynthesis of AMP from IMP. The polypeptide is Adenylosuccinate synthetase (Bacillus cereus (strain ATCC 10987 / NRS 248)).